A 289-amino-acid chain; its full sequence is Iodotyrosine deiodinase 1 (289 aa).

The chain crosses the membrane as a helical span at residues 1-21 (MYFLTPILVAILCILVVWIFK). A compositionally biased stretch (basic and acidic residues) spans 29 to 58 (KKKGEPRTRAEARPWVDEDLKDSSDLHQAE). The disordered stretch occupies residues 29–69 (KKKGEPRTRAEARPWVDEDLKDSSDLHQAEEDADEWQESEE). Residues 59–69 (EDADEWQESEE) are compositionally biased toward acidic residues. FMN contacts are provided by residues 100–104 (RRSVR), Ser128, and 128–129 (SG). 3-iodo-L-tyrosine contacts are provided by Ala130, Glu157, Tyr161, and Lys182. FMN-binding positions include 237 to 239 (TTT) and Arg279.

This sequence belongs to the nitroreductase family. Homodimer. FMN serves as cofactor. Expressed at a high level in thyroid gland (at protein level). Expressed at a high level in thyroid gland and at lower level in kidney and trachea.

The protein localises to the cell membrane. It is found in the cytoplasmic vesicle membrane. The enzyme catalyses 2 iodide + L-tyrosine + 2 NADP(+) = 3,5-diiodo-L-tyrosine + 2 NADPH + H(+). It catalyses the reaction iodide + L-tyrosine + NADP(+) = 3-iodo-L-tyrosine + NADPH. The catalysed reaction is 3-iodo-L-tyrosine + iodide + NADP(+) = 3,5-diiodo-L-tyrosine + NADPH + H(+). It carries out the reaction L-tyrosine + chloride + NADP(+) = 3-chloro-L-tyrosine + NADPH. The enzyme catalyses bromide + L-tyrosine + NADP(+) = 3-bromo-L-tyrosine + NADPH. In terms of biological role, catalyzes the dehalogenation of halotyrosines such as 3-bromo-L-tyrosine, 3-chloro-L-tyrosine, 3-iodo-L-tyrosine and 3,5-diiodo-L-tyrosine. During thyroid hormone biosynthesis, facilitates iodide salvage by catalysing the oxidative NADPH-dependent deiodination of the halogenated by-products of thyroid hormone production, monoiodotyrosine (L-MIT) and diiodotyrosine (L-DIT). The scavanged iodide can then reenter the hormone-producing pathways. Acts more efficiently on 3-iodo-L-tyrosine than 3,5-diiodo-L-tyrosine. The chain is Iodotyrosine deiodinase 1 from Homo sapiens (Human).